Consider the following 353-residue polypeptide: UPF0283 membrane protein YcjF (353 aa).

A compositionally biased stretch (basic and acidic residues) spans M1–P19. Residues M1–R35 are disordered. 3 consecutive transmembrane segments (helical) span residues M70 to T90, V100 to V120, and E213 to W233.

It belongs to the UPF0283 family.

The protein resides in the cell inner membrane. This chain is UPF0283 membrane protein YcjF, found in Salmonella enteritidis PT4 (strain P125109).